Here is a 545-residue protein sequence, read N- to C-terminus: CTP synthase (545 aa).

Residues 1–266 (MATNYIFVTG…DTFVCDRFRL (266 aa)) are amidoligase domain. Serine 14 contributes to the CTP binding site. Serine 14 lines the UTP pocket. Residues 15–20 (SLGKGI) and aspartate 72 contribute to the ATP site. The Mg(2+) site is built by aspartate 72 and glutamate 140. Residues 147-149 (DIE), 187-192 (KTKPTQ), and lysine 223 each bind CTP. UTP-binding positions include 187 to 192 (KTKPTQ) and lysine 223. Residue 239 to 241 (KDV) participates in ATP binding. Residues 291 to 542 (TIGMVGKYVE…VKAAKDYQDS (252 aa)) enclose the Glutamine amidotransferase type-1 domain. Glycine 352 lines the L-glutamine pocket. Cysteine 379 acts as the Nucleophile; for glutamine hydrolysis in catalysis. L-glutamine contacts are provided by residues 380 to 383 (LGMQ), glutamate 403, and arginine 470. Catalysis depends on residues histidine 515 and glutamate 517.

It belongs to the CTP synthase family. In terms of assembly, homotetramer.

It carries out the reaction UTP + L-glutamine + ATP + H2O = CTP + L-glutamate + ADP + phosphate + 2 H(+). It catalyses the reaction L-glutamine + H2O = L-glutamate + NH4(+). The catalysed reaction is UTP + NH4(+) + ATP = CTP + ADP + phosphate + 2 H(+). The protein operates within pyrimidine metabolism; CTP biosynthesis via de novo pathway; CTP from UDP: step 2/2. Allosterically activated by GTP, when glutamine is the substrate; GTP has no effect on the reaction when ammonia is the substrate. The allosteric effector GTP functions by stabilizing the protein conformation that binds the tetrahedral intermediate(s) formed during glutamine hydrolysis. Inhibited by the product CTP, via allosteric rather than competitive inhibition. Catalyzes the ATP-dependent amination of UTP to CTP with either L-glutamine or ammonia as the source of nitrogen. Regulates intracellular CTP levels through interactions with the four ribonucleotide triphosphates. The chain is CTP synthase from Actinobacillus pleuropneumoniae serotype 7 (strain AP76).